The chain runs to 138 residues: Basic phospholipase A2 Bs-N6 (138 aa).

Residues 1 to 16 (MRTLWIVAVLLVGVEG) form the signal peptide. 7 cysteine pairs are disulfide-bonded: Cys42-Cys131, Cys44-Cys60, Cys59-Cys111, Cys65-Cys138, Cys66-Cys104, Cys73-Cys97, and Cys91-Cys102. Tyr43, Gly45, and Gly47 together coordinate Ca(2+). Residue His63 is part of the active site. Position 64 (Asp64) interacts with Ca(2+). Asp105 is an active-site residue.

In terms of assembly, monomer. Requires Ca(2+) as cofactor. Contains 7 disulfide bonds. Expressed by the venom gland.

It is found in the secreted. It carries out the reaction a 1,2-diacyl-sn-glycero-3-phosphocholine + H2O = a 1-acyl-sn-glycero-3-phosphocholine + a fatty acid + H(+). Snake venom phospholipase A2 (PLA2) that shows myotoxic activities. PLA2 catalyzes the calcium-dependent hydrolysis of the 2-acyl groups in 3-sn-phosphoglycerides. The sequence is that of Basic phospholipase A2 Bs-N6 from Bothriechis schlegelii (Eyelash palm pitviper).